Consider the following 676-residue polypeptide: Serine/threonine-protein kinase Haspin homolog ALK2 (676 aa).

Residues 53-93 form a disordered region; the sequence is HKGSAEDESQSFFTSSDSPTSKTRPVGKTIENDDYYGKRSS. The span at 62–75 shows a compositional bias: polar residues; the sequence is QSFFTSSDSPTSKT. Positions 116 to 118 match the KEN box motif; that stretch reads KEN. A D box motif is present at residues 150–158; it reads RTPLRPISN. The interval 228 to 312 is disordered; it reads SSRSVNDQDP…HKTSHSSLNK (85 aa). The span at 232–259 shows a compositional bias: polar residues; that stretch reads VNDQDPNFVQPKPTNSLQKKSSISSFHN. In terms of domain architecture, Protein kinase spans 383 to 672; that stretch reads LCDVKYILHD…TCGDLLSLKG (290 aa). ATP contacts are provided by residues 389-397 and K430; that span reads ILHDLREAQ.

It belongs to the protein kinase superfamily. Ser/Thr protein kinase family. Haspin subfamily. In terms of processing, periodically phosphorylated during the cell cycle with a phosphorylation peak during mitosis and hyperphosphorylated after DNA damage.

It catalyses the reaction L-seryl-[protein] + ATP = O-phospho-L-seryl-[protein] + ADP + H(+). The enzyme catalyses L-threonyl-[protein] + ATP = O-phospho-L-threonyl-[protein] + ADP + H(+). Serine/threonine haspin-like protein kinase involved in cell cycle regulation. The protein is Serine/threonine-protein kinase Haspin homolog ALK2 (ALK2) of Saccharomyces cerevisiae (strain ATCC 204508 / S288c) (Baker's yeast).